We begin with the raw amino-acid sequence, 272 residues long: Undecaprenyl-diphosphatase (272 aa).

7 consecutive transmembrane segments (helical) span residues 2–22 (FDIIKAVIIGIVEGLTEFLPI), 43–63 (FISMFEYVIQFGAILAVVLLY), 82–102 (WQLWAKVIIAVLPSAVVGLPL), 110–130 (LHTPIVVATTLIVYGILFIIL), 185–205 (YVATEFSFFLAIPTMVGVLII), 224–244 (VLMTGSIVSFLVAIVAIKWLL), and 252–272 (FKPFGWYRIALGAIVLLVMFI).

It belongs to the UppP family.

Its subcellular location is the cell membrane. The catalysed reaction is di-trans,octa-cis-undecaprenyl diphosphate + H2O = di-trans,octa-cis-undecaprenyl phosphate + phosphate + H(+). Functionally, catalyzes the dephosphorylation of undecaprenyl diphosphate (UPP). Confers resistance to bacitracin. The polypeptide is Undecaprenyl-diphosphatase (Lacticaseibacillus casei (strain BL23) (Lactobacillus casei)).